Consider the following 305-residue polypeptide: Acyl transferase (305 aa).

Active-site charge relay system residues include Ser-116, Asp-213, and His-243.

Belongs to the LuxD family.

Its pathway is lipid metabolism; fatty acid reduction for biolumincescence. In terms of biological role, acyl transferase is part of the fatty acid reductase system required for aldehyde biosynthesis; it produces fatty acids for the luminescent reaction. The protein is Acyl transferase of Photobacterium leiognathi.